Consider the following 132-residue polypeptide: Translation initiation factor 5A (132 aa).

Lysine 36 carries the post-translational modification Hypusine.

It belongs to the eIF-5A family.

It localises to the cytoplasm. In terms of biological role, functions by promoting the formation of the first peptide bond. In Pyrobaculum neutrophilum (strain DSM 2338 / JCM 9278 / NBRC 100436 / V24Sta) (Thermoproteus neutrophilus), this protein is Translation initiation factor 5A (eIF5A).